The following is a 427-amino-acid chain: Peptidase B (427 aa).

Mn(2+) contacts are provided by Lys-195 and Asp-200. Residue Lys-207 is part of the active site. Positions 218, 277, and 279 each coordinate Mn(2+). Residue Arg-281 is part of the active site.

It belongs to the peptidase M17 family. In terms of assembly, homohexamer. Mn(2+) is required as a cofactor.

It localises to the cytoplasm. It catalyses the reaction Release of an N-terminal amino acid, Xaa, from a peptide or arylamide. Xaa is preferably Glu or Asp but may be other amino acids, including Leu, Met, His, Cys and Gln.. Functionally, probably plays an important role in intracellular peptide degradation. The polypeptide is Peptidase B (Escherichia coli (strain SMS-3-5 / SECEC)).